We begin with the raw amino-acid sequence, 206 residues long: Histidine biosynthesis bifunctional protein HisIE (206 aa).

The segment at 1-117 is phosphoribosyl-AMP cyclohydrolase; sequence MCNEPATSDV…SCFPAAPGQF (117 aa). The phosphoribosyl-ATP pyrophosphohydrolase stretch occupies residues 118 to 206; sequence LGALDALVAE…AVTVLEARHR (89 aa).

The protein in the N-terminal section; belongs to the PRA-CH family. It in the C-terminal section; belongs to the PRA-PH family.

The protein resides in the cytoplasm. It catalyses the reaction 1-(5-phospho-beta-D-ribosyl)-ATP + H2O = 1-(5-phospho-beta-D-ribosyl)-5'-AMP + diphosphate + H(+). The enzyme catalyses 1-(5-phospho-beta-D-ribosyl)-5'-AMP + H2O = 1-(5-phospho-beta-D-ribosyl)-5-[(5-phospho-beta-D-ribosylamino)methylideneamino]imidazole-4-carboxamide. The protein operates within amino-acid biosynthesis; L-histidine biosynthesis; L-histidine from 5-phospho-alpha-D-ribose 1-diphosphate: step 2/9. Its pathway is amino-acid biosynthesis; L-histidine biosynthesis; L-histidine from 5-phospho-alpha-D-ribose 1-diphosphate: step 3/9. The sequence is that of Histidine biosynthesis bifunctional protein HisIE (hisI) from Xylella fastidiosa (strain 9a5c).